We begin with the raw amino-acid sequence, 141 residues long: Transmembrane protein 216 (141 aa).

A run of 4 helical transmembrane segments spans residues Ile-15–Phe-35, Leu-49–Phe-69, Leu-82–Leu-102, and Ser-115–Phe-135.

Part of the tectonic-like complex (also named B9 complex). Interacts with TMEM107.

The protein resides in the membrane. The protein localises to the cytoplasm. Its subcellular location is the cytoskeleton. It localises to the cilium basal body. Functionally, part of the tectonic-like complex which is required for tissue-specific ciliogenesis and may regulate ciliary membrane composition. In Rattus norvegicus (Rat), this protein is Transmembrane protein 216 (Tmem216).